The primary structure comprises 124 residues: V-type proton ATPase subunit F 1 (124 aa).

Ser87 bears the Phosphoserine mark.

Belongs to the V-ATPase F subunit family. As to quaternary structure, V-ATPase is a heteromultimeric enzyme made up of two complexes: the ATP-hydrolytic V1 complex and the proton translocation V0 complex. The V1 complex consists of three catalytic AB heterodimers that form a heterohexamer, three peripheral stalks each consisting of EG heterodimers, one central rotor including subunits D and F, and the regulatory subunits C and H. The proton translocation complex V0 consists of the proton transport subunit a, a ring of proteolipid subunits c9c'', rotary subunit d, subunits e and f, and the accessory subunits VhaAC45 and ATP6AP2.

Its function is as follows. Subunit of the V1 complex of vacuolar(H+)-ATPase (V-ATPase), a multisubunit enzyme composed of a peripheral complex (V1) that hydrolyzes ATP and a membrane integral complex (V0) that translocates protons. V-ATPase is responsible for acidifying and maintaining the pH of intracellular compartments and in some cell types, is targeted to the plasma membrane, where it is responsible for acidifying the extracellular environment. The polypeptide is V-type proton ATPase subunit F 1 (Vha14-1) (Drosophila melanogaster (Fruit fly)).